The chain runs to 397 residues: Nicotinate phosphoribosyltransferase (397 aa).

Residue His-221 is modified to Phosphohistidine; by autocatalysis.

Belongs to the NAPRTase family. Transiently phosphorylated on a His residue during the reaction cycle. Phosphorylation strongly increases the affinity for substrates and increases the rate of nicotinate D-ribonucleotide production. Dephosphorylation regenerates the low-affinity form of the enzyme, leading to product release.

It catalyses the reaction nicotinate + 5-phospho-alpha-D-ribose 1-diphosphate + ATP + H2O = nicotinate beta-D-ribonucleotide + ADP + phosphate + diphosphate. It participates in cofactor biosynthesis; NAD(+) biosynthesis; nicotinate D-ribonucleotide from nicotinate: step 1/1. In terms of biological role, catalyzes the synthesis of beta-nicotinate D-ribonucleotide from nicotinate and 5-phospho-D-ribose 1-phosphate at the expense of ATP. This Herminiimonas arsenicoxydans protein is Nicotinate phosphoribosyltransferase.